The sequence spans 396 residues: MSEYSLFTSESVSEGHPDKIADQISDAVLDAIIVQDKHARVAVETLVKTGVAIVAGEVTTSAWVDLEQIVRDVICNIGYTSSDVGFDGNTCGIINIIGKQSPDINQGVDRAKPEDQGAGDQGLMFGYASNETDVLMPAPIVLSHRLVERQAEARKSGLLPWLRPDAKSQVTCRYENGKVVGIDAVVLSTQHNPEISQADLQEAVMELIVKHTLPAELLHKDTQYHINPTGKFVIGGPVGDCGLTGRKIIVDSYGGMARHGGGAFSGKDPSKVDRSAAYAGRYVAKNIVAAGLAERCEIQVSYAIGVAQPTSISVNTFGTNKVSEETIIKLVREVFDLRPYAITRMLDLLHPMYQDTAAYGHFGRTPQQKTVGEDSFTTFTWERTDKAADLRAAAGL.

His16 contacts ATP. Asp18 lines the Mg(2+) pocket. Glu44 is a K(+) binding site. 2 residues coordinate L-methionine: Glu57 and Gln100. Residues 100–110 (QSPDINQGVDR) are flexible loop. ATP is bound by residues 165 to 167 (DAK), 231 to 232 (KF), Asp240, 246 to 247 (RK), Ala263, and Lys267. Position 240 (Asp240) interacts with L-methionine. An L-methionine-binding site is contributed by Lys271.

It belongs to the AdoMet synthase family. In terms of assembly, homotetramer; dimer of dimers. The cofactor is Mg(2+). K(+) is required as a cofactor.

Its subcellular location is the cytoplasm. It carries out the reaction L-methionine + ATP + H2O = S-adenosyl-L-methionine + phosphate + diphosphate. It functions in the pathway amino-acid biosynthesis; S-adenosyl-L-methionine biosynthesis; S-adenosyl-L-methionine from L-methionine: step 1/1. Functionally, catalyzes the formation of S-adenosylmethionine (AdoMet) from methionine and ATP. The overall synthetic reaction is composed of two sequential steps, AdoMet formation and the subsequent tripolyphosphate hydrolysis which occurs prior to release of AdoMet from the enzyme. The polypeptide is S-adenosylmethionine synthase (Ectopseudomonas mendocina (strain ymp) (Pseudomonas mendocina)).